Reading from the N-terminus, the 142-residue chain is Large ribosomal subunit protein uL13 (142 aa).

The protein belongs to the universal ribosomal protein uL13 family. In terms of assembly, part of the 50S ribosomal subunit.

In terms of biological role, this protein is one of the early assembly proteins of the 50S ribosomal subunit, although it is not seen to bind rRNA by itself. It is important during the early stages of 50S assembly. This Thermococcus kodakarensis (strain ATCC BAA-918 / JCM 12380 / KOD1) (Pyrococcus kodakaraensis (strain KOD1)) protein is Large ribosomal subunit protein uL13.